Consider the following 299-residue polypeptide: Protoheme IX farnesyltransferase (299 aa).

Helical transmembrane passes span 25–45 (VVVLMLITSLVGMFLASRAGV), 47–67 (WTVLLFGNLGIGLCAGAAAAV), 95–115 (LAALGFALALAVAGMALLLTF), 119–139 (LAAWLTLASLLGYAVLYTGFL), 147–167 (IVIGGLAGAAPPLLGWVAVSG), 173–193 (PLLLVLIVFTWTPPHFWALAI), 218–238 (LHILLYTLALLAVTLLPYAIH), 243–263 (LYLLCALLLGGRFLHWAWALY), and 279–299 (IRYLFLLFIALLVDHYLPLTL).

Belongs to the UbiA prenyltransferase family. Protoheme IX farnesyltransferase subfamily.

Its subcellular location is the cell inner membrane. The catalysed reaction is heme b + (2E,6E)-farnesyl diphosphate + H2O = Fe(II)-heme o + diphosphate. It functions in the pathway porphyrin-containing compound metabolism; heme O biosynthesis; heme O from protoheme: step 1/1. Its function is as follows. Converts heme B (protoheme IX) to heme O by substitution of the vinyl group on carbon 2 of heme B porphyrin ring with a hydroxyethyl farnesyl side group. This Azotobacter vinelandii (strain DJ / ATCC BAA-1303) protein is Protoheme IX farnesyltransferase.